A 111-amino-acid polypeptide reads, in one-letter code: Prophage-derived-like uncharacterized protein YozM (111 aa).

The signal sequence occupies residues 1–24 (MKKRLIGFLVLVPALIMWGITLIE).

This chain is Prophage-derived-like uncharacterized protein YozM (yozM), found in Bacillus subtilis (strain 168).